Consider the following 40-residue polypeptide: MITDVQLAIFSNVLGVFLFLLVVAYHYINANTGKIGPKAK.

Residues 1–4 (MITD) lie on the Lumenal side of the membrane. The helical transmembrane segment at 5-25 (VQLAIFSNVLGVFLFLLVVAY) threads the bilayer. Over 26–40 (HYINANTGKIGPKAK) the chain is Cytoplasmic.

Belongs to the OST4 family. In terms of assembly, component of the oligosaccharyltransferase (OST) complex.

It is found in the endoplasmic reticulum membrane. In terms of biological role, subunit of the oligosaccharyl transferase (OST) complex that catalyzes the initial transfer of a defined glycan (Glc(3)Man(9)GlcNAc(2) in eukaryotes) from the lipid carrier dolichol-pyrophosphate to an asparagine residue within an Asn-X-Ser/Thr consensus motif in nascent polypeptide chains, the first step in protein N-glycosylation. N-glycosylation occurs cotranslationally and the complex associates with the Sec61 complex at the channel-forming translocon complex that mediates protein translocation across the endoplasmic reticulum (ER). All subunits are required for a maximal enzyme activity. In Drosophila willistoni (Fruit fly), this protein is Dolichyl-diphosphooligosaccharide--protein glycosyltransferase subunit 4.